A 380-amino-acid polypeptide reads, in one-letter code: Chaperone protein DnaJ (380 aa).

Positions 5-72 constitute a J domain; that stretch reads DYYDTLGVPK…QKRAAYDQYG (68 aa). A disordered region spans residues 21-47; the sequence is IKKAYRKLAMKHHPDRNQGDTSKVSED. Over residues 24–34 the composition is skewed to basic residues; the sequence is AYRKLAMKHHP. Over residues 35-47 the composition is skewed to basic and acidic residues; that stretch reads DRNQGDTSKVSED. The CR-type zinc-finger motif lies at 139-217; it reads GKEAQIRIPS…CHGVGKTKNN (79 aa). The Zn(2+) site is built by cysteine 152, cysteine 155, cysteine 169, cysteine 172, cysteine 191, cysteine 194, cysteine 205, and cysteine 208. CXXCXGXG motif repeat units follow at residues 152-159, 169-176, 191-198, and 205-212; these read CGICHGTG, CTTCHGHG, CPQCKGSG, and CVACHGVG.

Belongs to the DnaJ family. As to quaternary structure, homodimer. It depends on Zn(2+) as a cofactor.

Its subcellular location is the cytoplasm. Participates actively in the response to hyperosmotic and heat shock by preventing the aggregation of stress-denatured proteins and by disaggregating proteins, also in an autonomous, DnaK-independent fashion. Unfolded proteins bind initially to DnaJ; upon interaction with the DnaJ-bound protein, DnaK hydrolyzes its bound ATP, resulting in the formation of a stable complex. GrpE releases ADP from DnaK; ATP binding to DnaK triggers the release of the substrate protein, thus completing the reaction cycle. Several rounds of ATP-dependent interactions between DnaJ, DnaK and GrpE are required for fully efficient folding. Also involved, together with DnaK and GrpE, in the DNA replication of plasmids through activation of initiation proteins. In Polaromonas naphthalenivorans (strain CJ2), this protein is Chaperone protein DnaJ.